The primary structure comprises 1406 residues: Protein FAM135B (1406 aa).

Disordered regions lie at residues 519-548 (WTGQTSDAGTYPVADVDTSRRSPGPEDGQA) and 770-820 (SVSA…GDSG). 2 positions are modified to phosphoserine: serine 777 and serine 778. Over residues 804–816 (KSQGSPGSCSQLC) the composition is skewed to polar residues.

The protein belongs to the FAM135 family.

The protein is Protein FAM135B (FAM135B) of Homo sapiens (Human).